Reading from the N-terminus, the 690-residue chain is Amino-acid acetyltransferase, mitochondrial (690 aa).

The tract at residues Arg62 to Gly93 is disordered. The segment covering Arg75–Gln84 has biased composition (polar residues). The 172-residue stretch at Asp508–Gln679 folds into the N-acetyltransferase domain.

This sequence belongs to the acetyltransferase family.

Its subcellular location is the mitochondrion. The catalysed reaction is L-glutamate + acetyl-CoA = N-acetyl-L-glutamate + CoA + H(+). Its pathway is amino-acid biosynthesis; L-arginine biosynthesis; N(2)-acetyl-L-ornithine from L-glutamate: step 1/4. Its function is as follows. N-acetylglutamate synthase involved in arginine biosynthesis. In Talaromyces stipitatus (strain ATCC 10500 / CBS 375.48 / QM 6759 / NRRL 1006) (Penicillium stipitatum), this protein is Amino-acid acetyltransferase, mitochondrial (arg2).